The primary structure comprises 150 residues: Anthrone oxygenase gedH (150 aa).

The next 4 membrane-spanning stretches (helical) occupy residues 1-21 (MANP…PVFL), 41-61 (GHKL…WVAA), 73-93 (PVLA…CMVS), and 128-148 (LFPL…LVGG).

The protein belongs to the anthrone oxygenase family.

The protein localises to the membrane. It catalyses the reaction emodin anthrone + O2 = emodin + H2O + H(+). The protein operates within secondary metabolite biosynthesis. Functionally, anthrone oxygenase; part of the gene cluster that mediates the biosynthesis of geodin, an intermediate in the biosynthesis of other natural products. The pathway begins with the synthesis of atrochrysone thioester by the polyketide synthase (PKS) gedC. The atrochrysone carboxyl ACP thioesterase gedB then breaks the thioester bond and releases the atrochrysone carboxylic acid from gedC. The atrochrysone carboxylic acid is then converted to atrochrysone which is further transformed into emodin anthrone. The next step is performed by the emodin anthrone oxygenase gedH that catalyzes the oxidation of emodinanthrone to emodin. Emodin O-methyltransferase encoded probably by gedA then catalyzes methylation of the 8-hydroxy group of emodin to form questin. Ring cleavage of questin by questin oxidase gedK leads to desmethylsulochrin via several intermediates including questin epoxide. Another methylation step probably catalyzed by methyltransferase gedG leads to the formation of sulochrin which is further converted to dihydrogeodin by the sulochrin halogenase gedL. Finally, the dihydrogeodin oxidase gedJ catalyzes the stereospecific phenol oxidative coupling reaction converting dihydrogeodin to geodin. This chain is Anthrone oxygenase gedH, found in Aspergillus terreus (strain NIH 2624 / FGSC A1156).